The chain runs to 362 residues: Peptide chain release factor 1 (362 aa).

The residue at position 232 (Q232) is an N5-methylglutamine.

It belongs to the prokaryotic/mitochondrial release factor family. Methylated by PrmC. Methylation increases the termination efficiency of RF1.

It is found in the cytoplasm. Peptide chain release factor 1 directs the termination of translation in response to the peptide chain termination codons UAG and UAA. The polypeptide is Peptide chain release factor 1 (Myxococcus xanthus).